The chain runs to 198 residues: Heat shock 70 kDa protein (198 aa).

Residues 170-191 show a composition bias toward gly residues; that stretch reads GGGVPSGMPGGMPGAGGGGGKG. The tract at residues 170–198 is disordered; it reads GGGVPSGMPGGMPGAGGGGGKGPTIEEVD.

Belongs to the heat shock protein 70 family.

The protein is Heat shock 70 kDa protein of Schistosoma japonicum (Blood fluke).